The following is a 124-amino-acid chain: Small ribosomal subunit protein uS12 (124 aa).

Residue Asp89 is modified to 3-methylthioaspartic acid. Residue Lys108 is modified to N6-acetyllysine.

Belongs to the universal ribosomal protein uS12 family. In terms of assembly, part of the 30S ribosomal subunit. Contacts proteins S8 and S17. May interact with IF1 in the 30S initiation complex.

Its function is as follows. With S4 and S5 plays an important role in translational accuracy. In terms of biological role, interacts with and stabilizes bases of the 16S rRNA that are involved in tRNA selection in the A site and with the mRNA backbone. Located at the interface of the 30S and 50S subunits, it traverses the body of the 30S subunit contacting proteins on the other side and probably holding the rRNA structure together. The combined cluster of proteins S8, S12 and S17 appears to hold together the shoulder and platform of the 30S subunit. The chain is Small ribosomal subunit protein uS12 from Escherichia coli O139:H28 (strain E24377A / ETEC).